A 180-amino-acid polypeptide reads, in one-letter code: Thiol:disulfide interchange protein TxlA homolog (180 aa).

Residues L10–F26 traverse the membrane as a helical segment. The 110-residue stretch at S34–A143 folds into the Thioredoxin domain. C64 and C67 are disulfide-bonded.

The protein belongs to the thioredoxin family.

It is found in the cell membrane. Required for disulfide bond formation in some proteins. Acts by transferring its disulfide bond to other proteins and is reduced in the process. The protein is Thiol:disulfide interchange protein TxlA homolog (txlA) of Synechocystis sp. (strain ATCC 27184 / PCC 6803 / Kazusa).